Reading from the N-terminus, the 584-residue chain is A-type ATP synthase subunit A (584 aa).

233-240 (GPFGSGKT) lines the ATP pocket.

The protein belongs to the ATPase alpha/beta chains family. As to quaternary structure, has multiple subunits with at least A(3), B(3), C, D, E, F, H, I and proteolipid K(x).

The protein resides in the cell membrane. It carries out the reaction ATP + H2O + 4 H(+)(in) = ADP + phosphate + 5 H(+)(out). Its function is as follows. Component of the A-type ATP synthase that produces ATP from ADP in the presence of a proton gradient across the membrane. The A chain is the catalytic subunit. The sequence is that of A-type ATP synthase subunit A from Methanothermobacter thermautotrophicus (strain ATCC 29096 / DSM 1053 / JCM 10044 / NBRC 100330 / Delta H) (Methanobacterium thermoautotrophicum).